The sequence spans 461 residues: Ribulose bisphosphate carboxylase (461 aa).

Residue N112 participates in substrate binding. K167 serves as the catalytic Proton acceptor. Substrate is bound at residue K169. Positions 192, 194, and 195 each coordinate Mg(2+). N6-carboxylysine is present on K192. H288 (proton acceptor) is an active-site residue. The substrate site is built by R289, H322, and S369.

The protein belongs to the RuBisCO large chain family. Type II subfamily. Homodimer. It depends on Mg(2+) as a cofactor.

The enzyme catalyses 2 (2R)-3-phosphoglycerate + 2 H(+) = D-ribulose 1,5-bisphosphate + CO2 + H2O. The catalysed reaction is D-ribulose 1,5-bisphosphate + O2 = 2-phosphoglycolate + (2R)-3-phosphoglycerate + 2 H(+). Its function is as follows. RuBisCO catalyzes two reactions: the carboxylation of D-ribulose 1,5-bisphosphate, the primary event in carbon dioxide fixation, as well as the oxidative fragmentation of the pentose substrate. Both reactions occur simultaneously and in competition at the same active site. The polypeptide is Ribulose bisphosphate carboxylase (Rhodopseudomonas palustris (strain BisB18)).